Consider the following 737-residue polypeptide: Glycogen [starch] synthase, muscle (737 aa).

Ser8 is modified (phosphoserine; by AMPK and PKA). Ser11 carries the post-translational modification Phosphoserine. Lys39 contacts UDP. 2 residues coordinate UDP-alpha-D-glucose: His205 and Arg211. Positions 291, 292, 294, 297, and 301 each coordinate alpha-D-glucose 6-phosphate. UDP is bound at residue Arg331. Residue Arg331 participates in UDP-alpha-D-glucose binding. Ser412 carries the post-translational modification Phosphoserine. His501 is an alpha-D-glucose 6-phosphate binding site. Positions 510, 512, and 513 each coordinate UDP-alpha-D-glucose. Thr515 contacts UDP. Alpha-D-glucose 6-phosphate-binding residues include Arg582 and Arg586. The interval 634–737 (YRYPRPASVP…PTSSLGEERN (104 aa)) is disordered. Position 641 is a phosphoserine; by DYRK2, GSK3-alpha, GSK3-beta and PASK (Ser641). Phosphoserine; by GSK3-alpha and GSK3-beta occurs at positions 645 and 649. The residue at position 652 (Ser652) is a Phosphoserine. The residue at position 653 (Ser653) is a Phosphoserine; by GSK3-alpha and GSK3-beta. The residue at position 657 (Ser657) is a Phosphoserine; by CK2. The segment covering 658–681 (EDEEDPRNGPLEEDGERYDEDEEA) has biased composition (acidic residues). The span at 682–695 (AKDRRNIRAPEWPR) shows a compositional bias: basic and acidic residues. Residue Ser698 is modified to Phosphoserine. Residues 698-714 (SCTSSTSGSKRNSVDTA) show a composition bias toward polar residues. Thr700 is subject to Phosphothreonine. A Phosphoserine modification is found at Ser710. Residues 715-737 (TSSSLSTPSEPLSPTSSLGEERN) show a composition bias toward low complexity. Thr721 carries the phosphothreonine modification. Phosphoserine is present on residues Ser727 and Ser731.

It belongs to the glycosyltransferase 3 family. In terms of assembly, part of the GYS1-GYG1 complex, a heterooctamer composed of a tetramer of GYS1 and 2 dimers of GYG1, where each GYS1 protomer binds to one GYG1 subunit (via GYG1 C-terminus); the GYS1 tetramer may dissociate from GYG1 dimers to continue glycogen polymerization on its own. In terms of processing, phosphorylation at Ser-8 by AMPK inactivates the enzyme activity. Primed phosphorylation at Ser-657 (site 5) by CSNK2A1 and CSNK2A2 is required for inhibitory phosphorylation at Ser-641 (site 3a), Ser-645 (site 3b), Ser-649 (site 3c) and Ser-653 (site 4) by GSK3A an GSK3B. Phosphorylated at Ser-641 by PASK, leading to inactivation; phosphorylation by PASK is inhibited by glycogen. Phosphorylated at Ser-641 by DYRK2, leading to inactivation. Dephosphorylation at Ser-641 and Ser-645 by PP1 activates the enzyme.

It catalyses the reaction [(1-&gt;4)-alpha-D-glucosyl](n) + UDP-alpha-D-glucose = [(1-&gt;4)-alpha-D-glucosyl](n+1) + UDP + H(+). The protein operates within glycan biosynthesis; glycogen biosynthesis. With respect to regulation, allosteric activation by glucose-6-phosphate. Phosphorylation reduces the activity towards UDP-glucose. When in the non-phosphorylated state, glycogen synthase does not require glucose-6-phosphate as an allosteric activator; when phosphorylated it does. Glycogen synthase participates in the glycogen biosynthetic process along with glycogenin and glycogen branching enzyme. Extends the primer composed of a few glucose units formed by glycogenin by adding new glucose units to it. In this context, glycogen synthase transfers the glycosyl residue from UDP-Glc to the non-reducing end of alpha-1,4-glucan. This chain is Glycogen [starch] synthase, muscle (GYS1), found in Pongo abelii (Sumatran orangutan).